Consider the following 401-residue polypeptide: MRKNQISPYIKTSKIKNFTMNFGPQHPAAHGVLRLILELDGELVRKADPHIGLLHRGTEKLIEYKTYIQALPYFDRLDYVSMMSQEHAYSLAIEKLLNCNVPIRAQYIRVIYSELTRILNHILAVTTHAMDVGALTPFLWLFEEREKLMEFYERVSGARMHAAYIRPGGVAQDFPLGLWNDIMQFVEQFFWRLVEVEELLNGNRIWKQRLVDVGIVTAEEALSHGFSGVMLRGSGIAWDLRKNNPYEVYNKLNFNIPIGKNGDCYDRYLIRVYEMYESLNIIKQCLTAMPAGLIKVNDKKITPPERTDMKYSMESLIHHFKLYSEGFNVPENETYACVEAPKGEFGVYVVSDGSNKPYRCKIKAPGFLHLQSLNSMSKGHMIADVVTIIGTQDIVFGEIDR.

This sequence belongs to the complex I 49 kDa subunit family.

The protein resides in the mitochondrion. It catalyses the reaction a ubiquinone + NADH + 5 H(+)(in) = a ubiquinol + NAD(+) + 4 H(+)(out). Functionally, core subunit of the mitochondrial membrane respiratory chain NADH dehydrogenase (Complex I) that is believed to belong to the minimal assembly required for catalysis. Complex I functions in the transfer of electrons from NADH to the respiratory chain. The immediate electron acceptor for the enzyme is believed to be ubiquinone. Component of the iron-sulfur (IP) fragment of the enzyme. The polypeptide is NADH-ubiquinone oxidoreductase 49 kDa subunit (NAD7) (Acanthamoeba castellanii (Amoeba)).